Consider the following 125-residue polypeptide: Small ribosomal subunit protein uS12m (125 aa).

The protein belongs to the universal ribosomal protein uS12 family.

It is found in the mitochondrion. In terms of biological role, protein S12 is involved in the translation initiation step. The protein is Small ribosomal subunit protein uS12m (RPS12) of Allium cepa (Onion).